Consider the following 459-residue polypeptide: Sorting nexin-8 (459 aa).

The segment at 1 to 37 (MTGRAMDPLPSPAVAAAAEAEADEEADPPATGPRTSQ) is disordered. Residues 68 to 176 (AKDTVQVELI…KLFLSFSGSD (109 aa)) form the PX domain. The a 1,2-diacyl-sn-glycero-3-phospho-(1D-myo-inositol-3-phosphate) site is built by R104, K130, and R143. T446 carries the post-translational modification Phosphothreonine. S450 carries the post-translational modification Phosphoserine.

Belongs to the sorting nexin family.

It is found in the early endosome membrane. In terms of biological role, may be involved in several stages of intracellular trafficking. May play a role in intracellular protein transport from early endosomes to the trans-Golgi network. This chain is Sorting nexin-8 (Snx8), found in Mus musculus (Mouse).